The primary structure comprises 480 residues: Aspartyl/glutamyl-tRNA(Asn/Gln) amidotransferase subunit B (480 aa).

The protein belongs to the GatB/GatE family. GatB subfamily. As to quaternary structure, heterotrimer of A, B and C subunits.

It catalyses the reaction L-glutamyl-tRNA(Gln) + L-glutamine + ATP + H2O = L-glutaminyl-tRNA(Gln) + L-glutamate + ADP + phosphate + H(+). The enzyme catalyses L-aspartyl-tRNA(Asn) + L-glutamine + ATP + H2O = L-asparaginyl-tRNA(Asn) + L-glutamate + ADP + phosphate + 2 H(+). Functionally, allows the formation of correctly charged Asn-tRNA(Asn) or Gln-tRNA(Gln) through the transamidation of misacylated Asp-tRNA(Asn) or Glu-tRNA(Gln) in organisms which lack either or both of asparaginyl-tRNA or glutaminyl-tRNA synthetases. The reaction takes place in the presence of glutamine and ATP through an activated phospho-Asp-tRNA(Asn) or phospho-Glu-tRNA(Gln). This Streptococcus agalactiae serotype Ia (strain ATCC 27591 / A909 / CDC SS700) protein is Aspartyl/glutamyl-tRNA(Asn/Gln) amidotransferase subunit B.